The sequence spans 142 residues: Cell division protein SepF (142 aa).

This sequence belongs to the SepF family. In terms of assembly, homodimer. Interacts with FtsZ.

It localises to the cytoplasm. Cell division protein that is part of the divisome complex and is recruited early to the Z-ring. Probably stimulates Z-ring formation, perhaps through the cross-linking of FtsZ protofilaments. Its function overlaps with FtsA. The polypeptide is Cell division protein SepF (Geobacillus kaustophilus (strain HTA426)).